We begin with the raw amino-acid sequence, 328 residues long: Malate dehydrogenase (328 aa).

G11 to G17 contributes to the NAD(+) binding site. 2 residues coordinate substrate: R94 and R100. NAD(+)-binding positions include N107, Q114, and V131–N133. N133 and R164 together coordinate substrate. Residue H189 is the Proton acceptor of the active site.

Belongs to the LDH/MDH superfamily. MDH type 2 family.

The enzyme catalyses (S)-malate + NAD(+) = oxaloacetate + NADH + H(+). In terms of biological role, catalyzes the reversible oxidation of malate to oxaloacetate. This is Malate dehydrogenase from Stenotrophomonas maltophilia (strain R551-3).